The primary structure comprises 323 residues: Protein REDOX 2 (323 aa).

D53 contacts NADP(+). Catalysis depends on Y58, which acts as the Proton donor. Residue H121 coordinates substrate. NADP(+) is bound by residues 167–168 (SN), Q189, 215–220 (WSPLLS), and 289–297 (DQIHEIPQR). The tract at residues 302–323 (GEEFMHPEGPIKSPEELWDGDL) is disordered.

It belongs to the aldo/keto reductase family. In terms of assembly, monomer. Expressed in leaf epidermis.

It catalyses the reaction 15alpha-stemmadenine + NADP(+) = 17-dehydrostemmadenine + NADPH + 2 H(+). It participates in alkaloid biosynthesis. Component of iboga and aspidosperma monoterpenoid indole alkaloids (MIAs, e.g. tabersonine and catharanthine) biosynthesis pathway from 19E-geissoschizine. Catalyzes the second oxidation step of the unstable intermediate product resulting from the reaction triggered by the geissoschizine oxidase (GO) in the stemmadenine biosynthesis process from 19E-geissoschizine. This is Protein REDOX 2 from Catharanthus roseus (Madagascar periwinkle).